The primary structure comprises 365 residues: Sulfate/thiosulfate import ATP-binding protein CysA (365 aa).

Positions 3–237 constitute an ABC transporter domain; it reads IEIANIKKSF…PATRFVLEFM (235 aa). Position 35–42 (35–42) interacts with ATP; sequence GPSGSGKT.

The protein belongs to the ABC transporter superfamily. Sulfate/tungstate importer (TC 3.A.1.6) family. As to quaternary structure, the complex is composed of two ATP-binding proteins (CysA), two transmembrane proteins (CysT and CysW) and a solute-binding protein (CysP).

Its subcellular location is the cell inner membrane. The enzyme catalyses sulfate(out) + ATP + H2O = sulfate(in) + ADP + phosphate + H(+). It carries out the reaction thiosulfate(out) + ATP + H2O = thiosulfate(in) + ADP + phosphate + H(+). Its function is as follows. Part of the ABC transporter complex CysAWTP involved in sulfate/thiosulfate import. Responsible for energy coupling to the transport system. This chain is Sulfate/thiosulfate import ATP-binding protein CysA, found in Escherichia coli (strain K12).